A 548-amino-acid polypeptide reads, in one-letter code: Methyl-accepting chemotaxis protein HlyB (548 aa).

The Cytoplasmic portion of the chain corresponds to 1–10 (MIINKFSLKW). Residues 11 to 31 (MLAIAVAIPAIALLFVAFTSL) form a helical membrane-spanning segment. At 32–199 (NTMSVMQAQS…SFEAGRTKQM (168 aa)) the chain is on the periplasmic side. Residues 200 to 220 (VIIAAGLIISFITSLVIITNL) form a helical membrane-spanning segment. An HAMP domain is found at 218-271 (TNLRSRVAYLKDRMSSAAANLSLRTRLELDGNDELCDIGKSFNAFIDKVHHSIE). The Cytoplasmic segment spans residues 221-548 (RSRVAYLKDR…LDKLVGSFEL (328 aa)). Positions 276 to 512 (NSKELATMAS…DINRNVEDIN (237 aa)) constitute a Methyl-accepting transducer domain.

This sequence belongs to the methyl-accepting chemotaxis (MCP) protein family.

It localises to the cell inner membrane. Its function is as follows. Chemotactic-signal transducers respond to changes in the concentration of attractants and repellents in the environment, transduce a signal from the outside to the inside of the cell, and facilitate sensory adaptation through the variation of the level of methylation. In Vibrio cholerae serotype O1 (strain ATCC 39315 / El Tor Inaba N16961), this protein is Methyl-accepting chemotaxis protein HlyB (hlyB).